A 245-amino-acid polypeptide reads, in one-letter code: DNA repair protein RecO (245 aa).

This sequence belongs to the RecO family.

In terms of biological role, involved in DNA repair and RecF pathway recombination. This Bartonella bacilliformis (strain ATCC 35685 / KC583 / Herrer 020/F12,63) protein is DNA repair protein RecO.